Consider the following 194-residue polypeptide: RNA polymerase II subunit A C-terminal domain phosphatase SSU72 like protein 5 (194 aa).

Belongs to the SSU72 phosphatase family.

Its subcellular location is the nucleus. It catalyses the reaction O-phospho-L-seryl-[protein] + H2O = L-seryl-[protein] + phosphate. It carries out the reaction O-phospho-L-threonyl-[protein] + H2O = L-threonyl-[protein] + phosphate. Protein phosphatase that catalyzes the dephosphorylation of the C-terminal domain of RNA polymerase II. Plays a role in RNA processing and termination. The protein is RNA polymerase II subunit A C-terminal domain phosphatase SSU72 like protein 5 of Homo sapiens (Human).